A 208-amino-acid polypeptide reads, in one-letter code: Large ribosomal subunit protein uL3 (208 aa).

The segment at 123 to 147 is disordered; the sequence is RHGQSRGPMAHGSRYHRRPGSMGPV.

Belongs to the universal ribosomal protein uL3 family. In terms of assembly, part of the 50S ribosomal subunit. Forms a cluster with proteins L14 and L19.

In terms of biological role, one of the primary rRNA binding proteins, it binds directly near the 3'-end of the 23S rRNA, where it nucleates assembly of the 50S subunit. The protein is Large ribosomal subunit protein uL3 of Streptococcus gordonii (strain Challis / ATCC 35105 / BCRC 15272 / CH1 / DL1 / V288).